A 569-amino-acid polypeptide reads, in one-letter code: S-(+)-linalool synthase, chloroplastic (569 aa).

A chloroplast-targeting transit peptide spans 1–39 (MALIATKISSRSCFVSAYPNNSPTFLISKFPNTVDSLSP). (2E)-geranyl diphosphate contacts are provided by arginine 294, aspartate 331, aspartate 335, arginine 472, and aspartate 475. The Mg(2+) site is built by aspartate 331 and aspartate 335. Positions 331 to 335 (DDIFD) match the DDXXD motif motif. The Mg(2+) site is built by aspartate 475, serine 479, and glutamate 483.

This sequence belongs to the terpene synthase family. Tpsb subfamily. Mg(2+) serves as cofactor. The cofactor is Mn(2+). Predominantly expressed in flowers but also in stems and siliques.

The protein localises to the plastid. The protein resides in the chloroplast. It catalyses the reaction (2E)-geranyl diphosphate + H2O = (S)-linalool + diphosphate. It participates in secondary metabolite biosynthesis; terpenoid biosynthesis. In terms of biological role, involved in monoterpene (C10) biosynthesis. The major product is (S)-linalool. The polypeptide is S-(+)-linalool synthase, chloroplastic (Arabidopsis thaliana (Mouse-ear cress)).